A 157-amino-acid chain; its full sequence is 6,7-dimethyl-8-ribityllumazine synthase (157 aa).

Residues Phe-23, 57 to 59, and 81 to 83 contribute to the 5-amino-6-(D-ribitylamino)uracil site; these read AFE and AVI. A (2S)-2-hydroxy-3-oxobutyl phosphate-binding site is contributed by 86–87; the sequence is ST. His-89 serves as the catalytic Proton donor. Position 114 (Phe-114) interacts with 5-amino-6-(D-ribitylamino)uracil. Residue Arg-128 participates in (2S)-2-hydroxy-3-oxobutyl phosphate binding.

It belongs to the DMRL synthase family.

The enzyme catalyses (2S)-2-hydroxy-3-oxobutyl phosphate + 5-amino-6-(D-ribitylamino)uracil = 6,7-dimethyl-8-(1-D-ribityl)lumazine + phosphate + 2 H2O + H(+). It functions in the pathway cofactor biosynthesis; riboflavin biosynthesis; riboflavin from 2-hydroxy-3-oxobutyl phosphate and 5-amino-6-(D-ribitylamino)uracil: step 1/2. Catalyzes the formation of 6,7-dimethyl-8-ribityllumazine by condensation of 5-amino-6-(D-ribitylamino)uracil with 3,4-dihydroxy-2-butanone 4-phosphate. This is the penultimate step in the biosynthesis of riboflavin. This is 6,7-dimethyl-8-ribityllumazine synthase from Desulfosudis oleivorans (strain DSM 6200 / JCM 39069 / Hxd3) (Desulfococcus oleovorans).